The chain runs to 88 residues: Small ribosomal subunit protein uS15 (88 aa).

The protein belongs to the universal ribosomal protein uS15 family. Part of the 30S ribosomal subunit. Forms a bridge to the 50S subunit in the 70S ribosome, contacting the 23S rRNA.

In terms of biological role, one of the primary rRNA binding proteins, it binds directly to 16S rRNA where it helps nucleate assembly of the platform of the 30S subunit by binding and bridging several RNA helices of the 16S rRNA. Forms an intersubunit bridge (bridge B4) with the 23S rRNA of the 50S subunit in the ribosome. The sequence is that of Small ribosomal subunit protein uS15 from Hydrogenovibrio crunogenus (strain DSM 25203 / XCL-2) (Thiomicrospira crunogena).